The chain runs to 395 residues: S-adenosylmethionine synthase (395 aa).

Residue His16 coordinates ATP. A Mg(2+)-binding site is contributed by Asp18. Glu44 is a K(+) binding site. L-methionine contacts are provided by Glu57 and Gln100. The segment at 100–110 (QSTDIAQGVNE) is flexible loop. Residues 174-176 (DAK), 241-242 (RF), Asp250, 256-257 (RK), Ala273, and Lys277 each bind ATP. Asp250 provides a ligand contact to L-methionine. Residue Lys281 participates in L-methionine binding.

This sequence belongs to the AdoMet synthase family. In terms of assembly, homotetramer; dimer of dimers. Mg(2+) serves as cofactor. It depends on K(+) as a cofactor.

The protein resides in the cytoplasm. The enzyme catalyses L-methionine + ATP + H2O = S-adenosyl-L-methionine + phosphate + diphosphate. The protein operates within amino-acid biosynthesis; S-adenosyl-L-methionine biosynthesis; S-adenosyl-L-methionine from L-methionine: step 1/1. Catalyzes the formation of S-adenosylmethionine (AdoMet) from methionine and ATP. The overall synthetic reaction is composed of two sequential steps, AdoMet formation and the subsequent tripolyphosphate hydrolysis which occurs prior to release of AdoMet from the enzyme. This is S-adenosylmethionine synthase from Streptococcus uberis (strain ATCC BAA-854 / 0140J).